The sequence spans 230 residues: Gilatoxin (230 aa).

A Peptidase S1 domain is found at 1–230 (IIGGQECDET…ISFLFWIQSI (230 aa)). 5 cysteine pairs are disulfide-bonded: Cys7/Cys146, Cys26/Cys42, Cys125/Cys193, Cys157/Cys172, and Cys183/Cys208. Residue His41 is the Charge relay system of the active site. An N-linked (GlcNAc...) asparagine glycan is attached at Asn84. Residue Asp93 is the Charge relay system of the active site. Ser187 serves as the catalytic Charge relay system.

The protein belongs to the peptidase S1 family. Extensively glycosylated, contains approximately 8 mol of monosaccharide per mol of toxin. Expressed by the mandibular venom gland.

The protein localises to the secreted. Its function is as follows. Has kallikrein-like activity, releases bradykinin from kininogen. Catalyzes the hydrolysis of various arginine ester substrates for trypsin and thrombin and degrades both angiotensin I and II by cleavage of the dipeptide Asp-Arg from the NH2-terminal end. Fibrinogen is also degraded but a fibrin clot is not produced. May have a potentiating effect on potent hemorrhagic toxins present in the venom. In Heloderma horridum horridum (Mexican beaded lizard), this protein is Gilatoxin.